Consider the following 251-residue polypeptide: Ditrans,polycis-undecaprenyl-diphosphate synthase ((2E,6E)-farnesyl-diphosphate specific) (251 aa).

Residue Asp-21 is part of the active site. Mg(2+) is bound at residue Asp-21. Substrate is bound by residues 22-25 (GNNR), Trp-26, His-38, and 66-68 (SSE). Asn-69 functions as the Proton acceptor in the catalytic mechanism. Residues Trp-70, Arg-72, Arg-189, and 195 to 197 (RIS) contribute to the substrate site. Glu-208 lines the Mg(2+) pocket.

This sequence belongs to the UPP synthase family. In terms of assembly, homodimer. It depends on Mg(2+) as a cofactor.

It carries out the reaction 8 isopentenyl diphosphate + (2E,6E)-farnesyl diphosphate = di-trans,octa-cis-undecaprenyl diphosphate + 8 diphosphate. Its function is as follows. Catalyzes the sequential condensation of isopentenyl diphosphate (IPP) with (2E,6E)-farnesyl diphosphate (E,E-FPP) to yield (2Z,6Z,10Z,14Z,18Z,22Z,26Z,30Z,34E,38E)-undecaprenyl diphosphate (di-trans,octa-cis-UPP). UPP is the precursor of glycosyl carrier lipid in the biosynthesis of bacterial cell wall polysaccharide components such as peptidoglycan and lipopolysaccharide. This chain is Ditrans,polycis-undecaprenyl-diphosphate synthase ((2E,6E)-farnesyl-diphosphate specific), found in Pseudomonas syringae pv. tomato (strain ATCC BAA-871 / DC3000).